Here is a 324-residue protein sequence, read N- to C-terminus: Lactonase drp35 (324 aa).

Ca(2+)-binding residues include E47, S109, G111, D129, T132, Y134, D137, N184, D235, and S236. D235 functions as the Proton donor in the catalytic mechanism.

This sequence belongs to the SMP-30/CGR1 family. It depends on Ca(2+) as a cofactor.

The protein resides in the cytoplasm. In terms of biological role, exhibits lactonase activity. Acts in cells with perturbed membrane integrity and is possibly related to the membrane homeostasis. The protein is Lactonase drp35 (drp35) of Staphylococcus aureus (strain USA300).